Here is a 277-residue protein sequence, read N- to C-terminus: Large ribosomal subunit protein uL2 (277 aa).

Residues 223–264 (VAMNPVDHPHGGGEGKTAAGRHPVSPWGTPSKGSRTRRNKRT) form a disordered region.

Belongs to the universal ribosomal protein uL2 family. As to quaternary structure, part of the 50S ribosomal subunit. Forms a bridge to the 30S subunit in the 70S ribosome.

In terms of biological role, one of the primary rRNA binding proteins. Required for association of the 30S and 50S subunits to form the 70S ribosome, for tRNA binding and peptide bond formation. It has been suggested to have peptidyltransferase activity; this is somewhat controversial. Makes several contacts with the 16S rRNA in the 70S ribosome. This chain is Large ribosomal subunit protein uL2, found in Nitrosomonas eutropha (strain DSM 101675 / C91 / Nm57).